Here is a 1054-residue protein sequence, read N- to C-terminus: Calcium-transporting ATPase 2, endoplasmic reticulum-type (1054 aa).

Topologically, residues 1 to 53 (MEEEKSFSAWSWSVEQCLKEYKTRLDKGLTSEDVQIRRQKYGFNELAKEKGKP) are cytoplasmic. The helical transmembrane segment at 54–74 (LWHLVLEQFDDTLVKILLGAA) threads the bilayer. At 75–98 (FISFVLAFLGEEHGSGSGFEAFVE) the chain is on the lumenal side. A helical membrane pass occupies residues 99–118 (PFVIVLILILNAVVGVWQES). At 119–262 (NAEKALEALK…ESETPLKKKL (144 aa)) the chain is on the cytoplasmic side. Residues 263–282 (DEFGSRLTTAICIVCVLVWM) form a helical membrane-spanning segment. At 283 to 312 (INYKNFVSWDVVDGYKPVNIKFSFEKCTYY) the chain is on the lumenal side. A helical transmembrane segment spans residues 313–330 (FKIAVALAVAAIPEGLPA). Residues Val321, Ala322, Ile324, and Glu326 each coordinate Ca(2+). At 331–782 (VITTCLALGT…AEGRSIYNNM (452 aa)) the chain is on the cytoplasmic side. Residue Asp368 is the 4-aspartylphosphate intermediate of the active site. 2 residues coordinate Mg(2+): Asp727 and Asp731. Residues 783–802 (KAFIRYMISSNVGEVISIFL) form a helical membrane-spanning segment. 2 residues coordinate Ca(2+): Asn793 and Glu796. Residues 803 to 812 (TAALGIPECM) are Lumenal-facing. Residues 813–833 (IPVQLLWVNLVTDGPPATALG) traverse the membrane as a helical segment. Ca(2+) contacts are provided by Asn821, Thr824, and Asp825. Residues 834 to 853 (FNPADIDIMKKPPRKSDDCL) are Cytoplasmic-facing. The helical transmembrane segment at 854–876 (IDSWVLIRYLVIGSYVGVATVGI) threads the bilayer. Residues 877–949 (FVLWYTQASF…YFTLGKVKPM (73 aa)) lie on the Lumenal side of the membrane. Residues 950–969 (TLSLTVLVAIEMFNSLNALS) form a helical membrane-spanning segment. Ca(2+) is bound at residue Glu960. Over 970–982 (EDNSLLTMPPWRN) the chain is Cytoplasmic. Residues 983–1001 (PWLLVAMTVSFALHCVILY) form a helical membrane-spanning segment. The Lumenal segment spans residues 1002–1016 (VPFLANVFGIVPLSF). A helical membrane pass occupies residues 1017–1037 (REWFVVILVSFPVILIDEALK). The Cytoplasmic portion of the chain corresponds to 1038-1054 (FIGRCRRTRIKKKIKTM).

It belongs to the cation transport ATPase (P-type) (TC 3.A.3) family. Type IIA subfamily.

It is found in the membrane. It carries out the reaction Ca(2+)(in) + ATP + H2O = Ca(2+)(out) + ADP + phosphate + H(+). In terms of biological role, this magnesium-dependent enzyme catalyzes the hydrolysis of ATP coupled with the translocation of calcium from the cytosol to an endomembrane compartment. The sequence is that of Calcium-transporting ATPase 2, endoplasmic reticulum-type (ECA2) from Arabidopsis thaliana (Mouse-ear cress).